A 530-amino-acid chain; its full sequence is MNNMSLKFPDIAINSSESSDDEDPSSKNEKKDGSIKVVKGLTDEKKVFEKAKNDFDEALAIIDDDDFEYTKSEDDKVRRKIDFFILPIMCITYGMQYLDKTAVSYAAVYGMKQEAHLSGYVYSWLSTIFYLGYMIAQYPAGYLLQKFPISYFMFIAAFLWSACVLLMAACSNRHGLLTLRFFSGVFEGCVNPAFVALTAMWYKREEQPVRVVSWYAFNGVAIMVGALLGYGTGHIKGSLQNWKYPFLVIGAISTAWSFVYLFFPQNPVLARFLNAREKRIAVERVRKNRTGMETKKFKPSQALEAFKDPQVILIVLYNGLCQVTNAMSVFSALIIQGIGYSGINATLLTLPSGAFAVAGMIASGIFTHYFKKGRIPLAMTTSSLTIVGSIMIWKIPHSNPWPRVVGVWLFCTISSGNAVILSLLSSNISGYSKKVTVNATMFLFYSIGNIVSPQLFKAGQTPEYIEGIQASLVSVCLFEGVLALLAFYYIFENARRDKLLENNPALGGEIKNEEFLDKTDREQIKFRYVW.

The segment at 1–33 is disordered; it reads MNNMSLKFPDIAINSSESSDDEDPSSKNEKKDG. Residues 24–33 are compositionally biased toward basic and acidic residues; the sequence is PSSKNEKKDG. Helical transmembrane passes span 83–103, 124–144, 147–167, 181–201, 211–231, 244–264, 323–343, 346–366, 375–395, 404–424, 436–456, and 471–491; these read FFILPIMCITYGMQYLDKTAV, WLSTIFYLGYMIAQYPAGYLL, FPISYFMFIAAFLWSACVLLM, FFSGVFEGCVNPAFVALTAMW, VVSWYAFNGVAIMVGALLGYG, YPFLVIGAISTAWSFVYLFFP, VTNAMSVFSALIIQGIGYSGI, TLLTLPSGAFAVAGMIASGIF, IPLAMTTSSLTIVGSIMIWKI, VVGVWLFCTISSGNAVILSLL, TVNATMFLFYSIGNIVSPQLF, and SLVSVCLFEGVLALLAFYYIF.

It belongs to the major facilitator superfamily. Allantoate permease family.

The protein localises to the endoplasmic reticulum. It localises to the membrane. This is an uncharacterized protein from Schizosaccharomyces pombe (strain 972 / ATCC 24843) (Fission yeast).